The sequence spans 91 residues: Probable Fe(2+)-trafficking protein (91 aa).

Belongs to the Fe(2+)-trafficking protein family.

In terms of biological role, could be a mediator in iron transactions between iron acquisition and iron-requiring processes, such as synthesis and/or repair of Fe-S clusters in biosynthetic enzymes. This Burkholderia multivorans (strain ATCC 17616 / 249) protein is Probable Fe(2+)-trafficking protein.